The chain runs to 750 residues: Photosystem I P700 chlorophyll a apoprotein A1 (750 aa).

The next 8 membrane-spanning stretches (helical) occupy residues 70–93, 156–179, 195–219, 291–309, 346–369, 385–411, 433–455, and 531–549; these read VFSA…FHGA, LYCT…FHYH, LNHH…HVSL, IAHH…GHMY, WHAQ…HHMY, LSLF…IFMV, AIIS…LYIH, and FLVH…LILL. [4Fe-4S] cluster is bound by residues C573 and C582. 2 helical membrane-spanning segments follow: residues 589–610 and 664–686; these read HVFL…HFSW and LSAY…MFLF. H675 is a chlorophyll a' binding site. 2 residues coordinate chlorophyll a: M683 and Y691. W692 contributes to the phylloquinone binding site. A helical membrane pass occupies residues 724–744; sequence AVGVTHYLLGGIATTWAFFLA.

It belongs to the PsaA/PsaB family. In terms of assembly, the PsaA/B heterodimer binds the P700 chlorophyll special pair and subsequent electron acceptors. PSI consists of a core antenna complex that captures photons, and an electron transfer chain that converts photonic excitation into a charge separation. The eukaryotic PSI reaction center is composed of at least 11 subunits. Requires P700 is a chlorophyll a/chlorophyll a' dimer, A0 is one or more chlorophyll a, A1 is one or both phylloquinones and FX is a shared 4Fe-4S iron-sulfur center. as cofactor.

The protein localises to the plastid. It is found in the chloroplast thylakoid membrane. The enzyme catalyses reduced [plastocyanin] + hnu + oxidized [2Fe-2S]-[ferredoxin] = oxidized [plastocyanin] + reduced [2Fe-2S]-[ferredoxin]. PsaA and PsaB bind P700, the primary electron donor of photosystem I (PSI), as well as the electron acceptors A0, A1 and FX. PSI is a plastocyanin-ferredoxin oxidoreductase, converting photonic excitation into a charge separation, which transfers an electron from the donor P700 chlorophyll pair to the spectroscopically characterized acceptors A0, A1, FX, FA and FB in turn. Oxidized P700 is reduced on the lumenal side of the thylakoid membrane by plastocyanin. This is Photosystem I P700 chlorophyll a apoprotein A1 from Drimys granadensis.